Consider the following 1793-residue polypeptide: Non-reducing polyketide synthase adaA (1793 aa).

Positions 16–250 (NDDLKALFRG…YSKSLALPVY (235 aa)) are N-terminal acylcarrier protein transacylase domain (SAT). The region spanning 388–821 (DSKLAIVGMA…GGNTTLVLED (434 aa)) is the Ketosynthase family 3 (KS3) domain. Catalysis depends on for beta-ketoacyl synthase activity residues Cys561, His696, and His739. The malonyl-CoA:ACP transacylase (MAT) domain stretch occupies residues 923–1245 (VFTFTGQGAY…KSLCTLHLAG (323 aa)). The interval 1312–1634 (TSLIHQVTEE…RLLMDRFFSP (323 aa)) is product template (PT) domain. The segment at 1316–1452 (HQVTEETVDK…GSIKYPADPT (137 aa)) is N-terminal hotdog fold. Residues 1316-1629 (HQVTEETVDK…FRRVPRLLMD (314 aa)) enclose the PKS/mFAS DH domain. Catalysis depends on His1348, which acts as the Proton acceptor; for dehydratase activity. Residues 1482-1629 (KASTLSKPLA…FRRVPRLLMD (148 aa)) form a C-terminal hotdog fold region. Asp1540 functions as the Proton donor; for dehydratase activity in the catalytic mechanism. The span at 1642-1659 (AAPAPAPAAVPAVKKQPP) shows a compositional bias: low complexity. The disordered stretch occupies residues 1642 to 1714 (AAPAPAPAAV…TTEQEAPVAD (73 aa)). The segment covering 1660–1681 (TETIQPQAPKTEQKQDQLQLPN) has biased composition (polar residues). Low complexity predominate over residues 1683-1706 (ASAAPSTANSSSSPSSSGVATPTT). Residues 1716-1793 (SAVTGVAGKC…DLTGWLEQYC (78 aa)) enclose the Carrier domain. O-(pantetheine 4'-phosphoryl)serine is present on Ser1753.

The cofactor is pantetheine 4'-phosphate.

The catalysed reaction is holo-[ACP] + 9 malonyl-CoA + acetyl-CoA + 9 H(+) = 3-(2,4-dioxopentyl)-3,6,8,9-tetrahydroxy-1-oxo-1,2,3,4-tetrahydroanthracene-2-carboxyl-[ACP] + 9 CO2 + 10 CoA + 2 H2O. The protein operates within secondary metabolite biosynthesis. Non-reducing polyketide synthase; part of the gene cluster that mediates the biosynthesis of the linear tetracyclic TAN-1612 neuropeptide Y receptor antagonist. The decaketide backbone of TAN-1612 is synthesized by the non-reducing polyketide synthase adaA via condensation of one acetyl-CoA starter unit with 9 malonyl-CoA units. The FAD-dependent monooxygenase adaC then performs hydroxylation at C2 while the polaketide chain is still attached to the NRPKS adaA. The alpha-hydroxylation step at C2 appears to be crucial for the following C18-C1 Claisen cyclization and release of the C9-hydroxyl version of TAN-1612 from the NRPKS adaA, two steps performed by the lactamase-like protein adaB. Finally, the O-methyltransferase adaD performs the C9 O-methylation to complete the biosynthesis of TAN-1612. In Aspergillus niger (strain ATCC MYA-4892 / CBS 513.88 / FGSC A1513), this protein is Non-reducing polyketide synthase adaA.